The sequence spans 284 residues: uncharacterized protein (284 aa).

Residues 1 to 27 are compositionally biased toward polar residues; the sequence is MSNLPTSTPVSPSNLAEENPKSNNPES. Disordered stretches follow at residues 1–29 and 248–284; these read MSNL…ESSE and TRDS…LKKK.

This is an uncharacterized protein from Caenorhabditis elegans.